Reading from the N-terminus, the 474-residue chain is Glutathione synthetase (474 aa).

Alanine 2 bears the N-acetylalanine mark. Arginine 125 contributes to the substrate binding site. Glutamate 144 is an ATP binding site. Mg(2+) contacts are provided by glutamate 144 and asparagine 146. Residues 148 to 151, 214 to 216, glutamine 220, and 267 to 270 each bind substrate; these read ISAS, ERN, and RDGY. ATP contacts are provided by residues lysine 305, 364-373, tyrosine 375, and 398-401; these read KPQREGGGNN and MEKI. Glutamate 368 contributes to the Mg(2+) binding site. Serine 415 is modified (phosphoserine). Glutamate 425 contributes to the ATP binding site. Arginine 450 provides a ligand contact to substrate. Lysine 452 and aspartate 458 together coordinate ATP. 461–462 provides a ligand contact to substrate; it reads VA.

This sequence belongs to the eukaryotic GSH synthase family. As to quaternary structure, homodimer. Requires Mg(2+) as cofactor.

The catalysed reaction is gamma-L-glutamyl-L-cysteine + glycine + ATP = glutathione + ADP + phosphate + H(+). The enzyme catalyses gamma-L-glutamyl-(2S)-2-aminobutanoate + glycine + ATP = ophthalmate + ADP + phosphate + H(+). Its pathway is sulfur metabolism; glutathione biosynthesis; glutathione from L-cysteine and L-glutamate: step 2/2. Functionally, catalyzes the production of glutathione from gamma-glutamylcysteine and glycine in an ATP-dependent manner. Glutathione (gamma-glutamylcysteinylglycine, GSH) is the most abundant intracellular thiol in living aerobic cells and is required for numerous processes including the protection of cells against oxidative damage, amino acid transport, the detoxification of foreign compounds, the maintenance of protein sulfhydryl groups in a reduced state and acts as a cofactor for a number of enzymes. Participates in ophthalmate biosynthesis in hepatocytes. The sequence is that of Glutathione synthetase from Mus musculus (Mouse).